Here is a 247-residue protein sequence, read N- to C-terminus: Acetate transporter protein patA (247 aa).

N20 carries an N-linked (GlcNAc...) asparagine glycan. 6 helical membrane-spanning segments follow: residues P37–F57, A71–V91, V106–G126, A141–M161, A169–A189, and A202–M222.

It belongs to the acetate uptake transporter (AceTr) (TC 2.A.96) family.

It localises to the endoplasmic reticulum membrane. It participates in mycotoxin biosynthesis; patulin biosynthesis. Acetate transporter protein; part of the gene cluster that mediates the biosynthesis of patulin, an acetate-derived tetraketide mycotoxin produced by several fungal species that shows antimicrobial properties against several bacteria. May be involved in the uptake of acetate, a substrate for the synthesis of 6-methylsalicylic acid by the polyketide synthase patK. The chain is Acetate transporter protein patA from Aspergillus clavatus (strain ATCC 1007 / CBS 513.65 / DSM 816 / NCTC 3887 / NRRL 1 / QM 1276 / 107).